A 1050-amino-acid polypeptide reads, in one-letter code: Valine--tRNA ligase (1050 aa).

Basic and acidic residues predominate over residues 37 to 57 (EKKAAASDKPVKEAKAKKEQT). Residues 37–72 (EKKAAASDKPVKEAKAKKEQTVEAAEPVDQTPTGQR) are disordered. The 'HIGH' region motif lies at 127-137 (PNVTGNLHVGH). Positions 642–646 (KMSKS) match the 'KMSKS' region motif. An ATP-binding site is contributed by lysine 645.

Belongs to the class-I aminoacyl-tRNA synthetase family.

It carries out the reaction tRNA(Val) + L-valine + ATP = L-valyl-tRNA(Val) + AMP + diphosphate. The chain is Valine--tRNA ligase from Caenorhabditis elegans.